The sequence spans 612 residues: Alpha-glycerophosphate oxidase (612 aa).

Position 21–49 (21–49) interacts with FAD; that stretch reads DLLIIGGGITGAGVALQAAASGLDTGLIE. A compositionally biased stretch (basic and acidic residues) spans 398–408; sequence VETSTSEKELD. The tract at residues 398-418 is disordered; it reads VETSTSEKELDPSAVSRGSSF.

Belongs to the FAD-dependent glycerol-3-phosphate dehydrogenase family. FAD is required as a cofactor.

It localises to the cytoplasm. The catalysed reaction is sn-glycerol 3-phosphate + O2 = dihydroxyacetone phosphate + H2O2. The chain is Alpha-glycerophosphate oxidase (glpO) from Streptococcus pyogenes serotype M18 (strain MGAS8232).